Reading from the N-terminus, the 158-residue chain is Transcriptional regulatory protein DoeX (158 aa).

The HTH asnC-type domain occupies 3–64; the sequence is LDRYDLKILE…RLNTDVLVKR (62 aa). Positions 22-41 form a DNA-binding region, H-T-H motif; the sequence is KSKLAEAINLSVSPCWERVR.

It is found in the cytoplasm. In terms of biological role, acts as a transcriptional regulator. It binds DNA specifically to a fragment from the doeA promoter region. The chain is Transcriptional regulatory protein DoeX (doeX) from Halomonas elongata (strain ATCC 33173 / DSM 2581 / NBRC 15536 / NCIMB 2198 / 1H9).